Consider the following 393-residue polypeptide: Proteasome-activating nucleotidase (393 aa).

The stretch at 14–53 forms a coiled coil; that stretch reads SDEVQLVRLLEEKIKSLQIEIENLRKELNYYKAEMEKMLS. ATP-binding positions include 178-183 and tyrosine 317; that span reads GTGKTM. Residues 391 to 393 are docks into pockets in the proteasome alpha-ring to cause gate opening; sequence KYS.

The protein belongs to the AAA ATPase family. In terms of assembly, homohexamer. The hexameric complex has a two-ring architecture resembling a top hat that caps the 20S proteasome core at one or both ends. Upon ATP-binding, the C-terminus of PAN interacts with the alpha-rings of the proteasome core by binding to the intersubunit pockets.

The protein localises to the cytoplasm. ATPase which is responsible for recognizing, binding, unfolding and translocation of substrate proteins into the archaeal 20S proteasome core particle. Is essential for opening the gate of the 20S proteasome via an interaction with its C-terminus, thereby allowing substrate entry and access to the site of proteolysis. Thus, the C-termini of the proteasomal ATPase function like a 'key in a lock' to induce gate opening and therefore regulate proteolysis. Unfolding activity requires energy from ATP hydrolysis, whereas ATP binding alone promotes ATPase-20S proteasome association which triggers gate opening, and supports translocation of unfolded substrates. The sequence is that of Proteasome-activating nucleotidase from Saccharolobus islandicus (strain Y.N.15.51 / Yellowstone #2) (Sulfolobus islandicus).